The sequence spans 507 residues: Ribonuclease Y (507 aa).

A helical membrane pass occupies residues 1–21 (MLWYIVAGAGGLLIGYLIASY). The KH domain maps to 197–282 (TVSTVSLPSD…EMYEKAKQEV (86 aa)). One can recognise an HD domain in the interval 323–416 (VLNHSIEVAL…VAAADALSAA (94 aa)).

The protein belongs to the RNase Y family.

The protein resides in the cell membrane. Functionally, endoribonuclease that initiates mRNA decay. The chain is Ribonuclease Y from Thermotoga petrophila (strain ATCC BAA-488 / DSM 13995 / JCM 10881 / RKU-1).